A 222-amino-acid polypeptide reads, in one-letter code: Small ribosomal subunit protein uS3 (222 aa).

The KH type-2 domain maps to 39 to 107 (IRKYIKTKFY…QININIAEIK (69 aa)).

Belongs to the universal ribosomal protein uS3 family. In terms of assembly, part of the 30S ribosomal subunit. Forms a tight complex with proteins S10 and S14.

Its function is as follows. Binds the lower part of the 30S subunit head. Binds mRNA in the 70S ribosome, positioning it for translation. The chain is Small ribosomal subunit protein uS3 from Carboxydothermus hydrogenoformans (strain ATCC BAA-161 / DSM 6008 / Z-2901).